Here is a 120-residue protein sequence, read N- to C-terminus: Large ribosomal subunit protein uL18 (120 aa).

Belongs to the universal ribosomal protein uL18 family. Part of the 50S ribosomal subunit; part of the 5S rRNA/L5/L18/L25 subcomplex. Contacts the 5S and 23S rRNAs.

This is one of the proteins that bind and probably mediate the attachment of the 5S RNA into the large ribosomal subunit, where it forms part of the central protuberance. This chain is Large ribosomal subunit protein uL18, found in Bacillus cereus (strain AH820).